Reading from the N-terminus, the 852-residue chain is Probable LRR receptor-like serine/threonine-protein kinase At1g05700 (852 aa).

The first 25 residues, 1 to 25 (MEEFRFLYLIYSAAFALCLVVSVLA), serve as a signal peptide directing secretion. The Extracellular portion of the chain corresponds to 26 to 510 (QDQSGFISID…SCRKSNSKKL (485 aa)). 9 N-linked (GlcNAc...) asparagine glycosylation sites follow: Asn138, Asn182, Asn231, Asn240, Asn258, Asn293, Asn400, Asn415, and Asn431. LRR repeat units lie at residues 410 to 432 (RITSLNLSSSGLTGHISSSFSNL), 434 to 457 (MIQELDLSNNGLTGDIPEFLSKLK), and 458 to 479 (FLRVLNLENNTLTGSVPSELLE). Asn466 carries N-linked (GlcNAc...) asparagine glycosylation. A helical transmembrane segment spans residues 511-531 (VIPLVASFAALFILLLLSGVF). The Cytoplasmic portion of the chain corresponds to 532 to 852 (WRIRNRRNKS…LQREESNKNY (321 aa)). Thr561 is modified (phosphothreonine). One can recognise a Protein kinase domain in the interval 570–843 (NNFGQVLGKG…HIVRGLNECL (274 aa)). ATP contacts are provided by residues 576 to 584 (LGKGGFGTV) and Lys597. Tyr642 carries the post-translational modification Phosphotyrosine. The Proton acceptor role is filled by Asp693. A phosphoserine mark is found at Ser697 and Ser727. 2 positions are modified to phosphothreonine: Thr728 and Thr733.

This sequence belongs to the protein kinase superfamily. Ser/Thr protein kinase family.

Its subcellular location is the membrane. It catalyses the reaction L-seryl-[protein] + ATP = O-phospho-L-seryl-[protein] + ADP + H(+). It carries out the reaction L-threonyl-[protein] + ATP = O-phospho-L-threonyl-[protein] + ADP + H(+). The sequence is that of Probable LRR receptor-like serine/threonine-protein kinase At1g05700 from Arabidopsis thaliana (Mouse-ear cress).